Consider the following 232-residue polypeptide: 5'-methylthioadenosine/S-adenosylhomocysteine nucleosidase (232 aa).

E12 functions as the Proton acceptor in the catalytic mechanism. Substrate-binding positions include G78, I152, and M173–E174. Residue D197 is the Proton donor of the active site.

This sequence belongs to the PNP/UDP phosphorylase family. MtnN subfamily. As to quaternary structure, homodimer.

The enzyme catalyses S-adenosyl-L-homocysteine + H2O = S-(5-deoxy-D-ribos-5-yl)-L-homocysteine + adenine. It carries out the reaction S-methyl-5'-thioadenosine + H2O = 5-(methylsulfanyl)-D-ribose + adenine. The catalysed reaction is 5'-deoxyadenosine + H2O = 5-deoxy-D-ribose + adenine. The protein operates within amino-acid biosynthesis; L-methionine biosynthesis via salvage pathway; S-methyl-5-thio-alpha-D-ribose 1-phosphate from S-methyl-5'-thioadenosine (hydrolase route): step 1/2. Catalyzes the irreversible cleavage of the glycosidic bond in both 5'-methylthioadenosine (MTA) and S-adenosylhomocysteine (SAH/AdoHcy) to adenine and the corresponding thioribose, 5'-methylthioribose and S-ribosylhomocysteine, respectively. Also cleaves 5'-deoxyadenosine, a toxic by-product of radical S-adenosylmethionine (SAM) enzymes, into 5-deoxyribose and adenine. Thus, is required for in vivo function of the radical SAM enzymes biotin synthase and lipoic acid synthase, that are inhibited by 5'-deoxyadenosine accumulation. In Klebsiella pneumoniae (strain 342), this protein is 5'-methylthioadenosine/S-adenosylhomocysteine nucleosidase.